Reading from the N-terminus, the 266-residue chain is RNA polymerase II subunit A C-terminal domain phosphatase ssu-72 (266 aa).

A disordered region spans residues 1-31 (MSAVDTPTGAASSSKPDQNEQNGQNGGREDS). The segment covering 9-23 (GAASSSKPDQNEQNG) has biased composition (polar residues).

Belongs to the SSU72 phosphatase family. As to quaternary structure, component of the cleavage and polyadenylation factor (CPF) complex.

It is found in the nucleus. The enzyme catalyses O-phospho-L-seryl-[protein] + H2O = L-seryl-[protein] + phosphate. It carries out the reaction O-phospho-L-threonyl-[protein] + H2O = L-threonyl-[protein] + phosphate. In terms of biological role, processively dephosphorylates Ser-5 of the heptad repeats YSPTSPS in the C-terminal domain of the largest RNA polymerase II subunit (rpb-1). Its function is as follows. Component of the cleavage and polyadenylation factor (CPF) complex, which plays a key role in polyadenylation-dependent pre-mRNA 3'-end formation and cooperates with cleavage factors including the CFIA complex and NAB4/CFIB. Ssu-72 is required for 3'-end formation of snoRNAs. This Neurospora crassa (strain ATCC 24698 / 74-OR23-1A / CBS 708.71 / DSM 1257 / FGSC 987) protein is RNA polymerase II subunit A C-terminal domain phosphatase ssu-72 (ssu-72).